Here is a 130-residue protein sequence, read N- to C-terminus: Small ribosomal subunit protein uS9 (130 aa).

Residues 102-130 (GFLTRDPRKKERKKYGLKKARKSPQFSKR) are disordered. Residues 111-130 (KERKKYGLKKARKSPQFSKR) are compositionally biased toward basic residues.

Belongs to the universal ribosomal protein uS9 family.

The polypeptide is Small ribosomal subunit protein uS9 (Finegoldia magna (strain ATCC 29328 / DSM 20472 / WAL 2508) (Peptostreptococcus magnus)).